Consider the following 769-residue polypeptide: Spastin (769 aa).

The disordered stretch occupies residues 1-100 (MVRTKNQSSS…TSGNVPRGGQ (100 aa)). Residues 1–113 (MVRTKNQSSS…KQNLYVVSFP (113 aa)) lie on the Cytoplasmic side of the membrane. Residues 1–201 (MVRTKNQSSS…QTLEMAASRG (201 aa)) are required for localization to punctate cytoplasmic foci. Positions 8 to 19 (SSSSSASSSTKS) are enriched in low complexity. The span at 24–33 (SGGGGGGGGS) shows a compositional bias: gly residues. Residues 54 to 63 (SSKLSSNRQR) are compositionally biased toward polar residues. Positions 64-78 (TTTTITTTTTTPGSS) are enriched in low complexity. The segment at residues 114–134 (IIFLFNVLRSLIYQLFCIFRY) is an intramembrane region (helical). Residues 135–769 (LYGASTKVIY…WSQDYGDITI (635 aa)) are Cytoplasmic-facing. The sufficient for interaction with microtubules and microtubule severing stretch occupies residues 199–769 (SRGGTGAGGY…WSQDYGDITI (571 aa)). In terms of domain architecture, MIT spans 224–299 (HRRAFEYISK…SMARDRLHFL (76 aa)). The interval 314 to 462 (KEQPKKQLPH…NAASGSGSGA (149 aa)) is disordered. Positions 334 to 344 (TTTSSGSSSSS) are enriched in low complexity. Polar residues-rich tracts occupy residues 395–413 (NKSQTLPRNLGSKTTSTSV) and 434–450 (QFSSGRNTPPQRSRTPI). Positions 451-462 (NNNAASGSGSGA) are enriched in low complexity. Residues 452-466 (NNAASGSGSGASTPL) form a required for interaction with microtubules region. 534 to 541 (GPPGNGKT) lines the ATP pocket.

This sequence belongs to the AAA ATPase family. Spastin subfamily. In terms of assembly, homohexamer. The homohexamer is stabilized by ATP-binding. The homohexamer may adopt a ring conformation through which microtubules pass prior to being severed. Interacts with microtubules. Interacts with atl; may be involved in microtubule dynamics.

The protein localises to the membrane. Its subcellular location is the cytoplasm. It localises to the cytoskeleton. It is found in the microtubule organizing center. The protein resides in the centrosome. The protein localises to the chromosome. Its subcellular location is the lipid droplet. The catalysed reaction is n ATP + n H2O + a microtubule = n ADP + n phosphate + (n+1) alpha/beta tubulin heterodimers.. In terms of biological role, ATP-dependent microtubule severing protein. Stimulates microtubule minus-end depolymerization and poleward microtubule flux in the mitotic spindle. Regulates microtubule stability in the neuromuscular junction synapse. Involved in lipid metabolism by regulating the size and distribution of lipid droplets. Involved in axon regeneration by regulating microtubule severing. This is Spastin from Drosophila virilis (Fruit fly).